Consider the following 400-residue polypeptide: Elongation factor Tu (400 aa).

The tr-type G domain maps to 10 to 208; the sequence is KPHLNVGTIG…TMDSYFPEPQ (199 aa). Residues 19 to 26 are G1; that stretch reads GHIDHGKT. Residue 19-26 coordinates GTP; that stretch reads GHIDHGKT. T26 is a binding site for Mg(2+). The G2 stretch occupies residues 60-64; that stretch reads GITIN. The G3 stretch occupies residues 81 to 84; that stretch reads DCPG. GTP contacts are provided by residues 81-85 and 136-139; these read DCPGH and NKTD. Residues 136–139 form a G4 region; it reads NKTD. The segment at 174–176 is G5; the sequence is SAL.

It belongs to the TRAFAC class translation factor GTPase superfamily. Classic translation factor GTPase family. EF-Tu/EF-1A subfamily. In terms of assembly, monomer.

The protein resides in the cytoplasm. The catalysed reaction is GTP + H2O = GDP + phosphate + H(+). Functionally, GTP hydrolase that promotes the GTP-dependent binding of aminoacyl-tRNA to the A-site of ribosomes during protein biosynthesis. In Thermosipho africanus (strain TCF52B), this protein is Elongation factor Tu.